Consider the following 148-residue polypeptide: tRNA-specific adenosine deaminase (148 aa).

The CMP/dCMP-type deaminase domain occupies 1 to 116 (MEQALKQARL…SNLRYFNSSA (116 aa)). Histidine 48 lines the Zn(2+) pocket. Glutamate 50 serves as the catalytic Proton donor. Cysteine 78 and cysteine 81 together coordinate Zn(2+).

It belongs to the cytidine and deoxycytidylate deaminase family. As to quaternary structure, homodimer. The cofactor is Zn(2+).

It carries out the reaction adenosine(34) in tRNA + H2O + H(+) = inosine(34) in tRNA + NH4(+). Catalyzes the deamination of adenosine to inosine at the wobble position 34 of tRNA(Arg2). The chain is tRNA-specific adenosine deaminase from Rickettsia typhi (strain ATCC VR-144 / Wilmington).